The following is a 130-amino-acid chain: Modulator protein MzrA (130 aa).

The Cytoplasmic segment spans residues 1 to 15 (MIAAFIKRHAPQRRL). Residues 16–36 (SLWLALPVVALLALVMMPALF) form a helical membrane-spanning segment. Topologically, residues 37–130 (RHDSALQIRA…RISFKPQSIG (94 aa)) are periplasmic.

Belongs to the MzrA family. Interacts with EnvZ.

It localises to the cell inner membrane. Its function is as follows. Modulates the activity of the EnvZ/OmpR two-component regulatory system, probably by directly modulating EnvZ enzymatic activity and increasing stability of phosphorylated OmpR. This chain is Modulator protein MzrA, found in Erwinia tasmaniensis (strain DSM 17950 / CFBP 7177 / CIP 109463 / NCPPB 4357 / Et1/99).